Here is a 206-residue protein sequence, read N- to C-terminus: Large ribosomal subunit protein uL4 (206 aa).

A disordered region spans residues 47–77 (GTQSTKTRSEVRGGGIKPWRQKGTGRARQGS).

This sequence belongs to the universal ribosomal protein uL4 family. Part of the 50S ribosomal subunit.

One of the primary rRNA binding proteins, this protein initially binds near the 5'-end of the 23S rRNA. It is important during the early stages of 50S assembly. It makes multiple contacts with different domains of the 23S rRNA in the assembled 50S subunit and ribosome. Functionally, forms part of the polypeptide exit tunnel. This chain is Large ribosomal subunit protein uL4, found in Clostridium beijerinckii (strain ATCC 51743 / NCIMB 8052) (Clostridium acetobutylicum).